We begin with the raw amino-acid sequence, 872 residues long: Alanine--tRNA ligase (872 aa).

Zn(2+) contacts are provided by H567, H571, C669, and H673.

This sequence belongs to the class-II aminoacyl-tRNA synthetase family. Requires Zn(2+) as cofactor.

It is found in the cytoplasm. The catalysed reaction is tRNA(Ala) + L-alanine + ATP = L-alanyl-tRNA(Ala) + AMP + diphosphate. Functionally, catalyzes the attachment of alanine to tRNA(Ala) in a two-step reaction: alanine is first activated by ATP to form Ala-AMP and then transferred to the acceptor end of tRNA(Ala). Also edits incorrectly charged Ser-tRNA(Ala) and Gly-tRNA(Ala) via its editing domain. This chain is Alanine--tRNA ligase, found in Streptococcus pyogenes serotype M4 (strain MGAS10750).